The following is a 396-amino-acid chain: 1-deoxy-D-xylulose 5-phosphate reductoisomerase (396 aa).

NADPH is bound by residues T15, G16, S17, I18, G41, and N129. 1-deoxy-D-xylulose 5-phosphate is bound at residue K130. E131 lines the NADPH pocket. D155 provides a ligand contact to Mn(2+). 1-deoxy-D-xylulose 5-phosphate is bound by residues S156, E157, S182, and H205. Residue E157 coordinates Mn(2+). G211 is an NADPH binding site. Positions 218, 223, 224, and 227 each coordinate 1-deoxy-D-xylulose 5-phosphate. E227 serves as a coordination point for Mn(2+).

Belongs to the DXR family. It depends on Mg(2+) as a cofactor. Mn(2+) is required as a cofactor.

The enzyme catalyses 2-C-methyl-D-erythritol 4-phosphate + NADP(+) = 1-deoxy-D-xylulose 5-phosphate + NADPH + H(+). The protein operates within isoprenoid biosynthesis; isopentenyl diphosphate biosynthesis via DXP pathway; isopentenyl diphosphate from 1-deoxy-D-xylulose 5-phosphate: step 1/6. Catalyzes the NADPH-dependent rearrangement and reduction of 1-deoxy-D-xylulose-5-phosphate (DXP) to 2-C-methyl-D-erythritol 4-phosphate (MEP). This is 1-deoxy-D-xylulose 5-phosphate reductoisomerase from Xanthomonas campestris pv. campestris (strain 8004).